Reading from the N-terminus, the 148-residue chain is MKALLILGLLLFSVAVQGKVFERCELARSLKRFGMDNFRGISLANWMCLARWESNYNTQATNYNAGDQSTDYGIFQINSHWWCNDGKTPGAVNACHLPCGALLQDDITQAVACAKRVVSDPQGIRAWVAWRSHCQNQDLTSYIQGCGV.

Residues 1-18 (MKALLILGLLLFSVAVQG) form the signal peptide. A C-type lysozyme domain is found at 19-148 (KVFERCELAR…LTSYIQGCGV (130 aa)). 4 disulfides stabilise this stretch: cysteine 24/cysteine 146, cysteine 48/cysteine 134, cysteine 83/cysteine 99, and cysteine 95/cysteine 113. Catalysis depends on residues glutamate 53 and aspartate 71.

Belongs to the glycosyl hydrolase 22 family. Expressed in blood cells.

It carries out the reaction Hydrolysis of (1-&gt;4)-beta-linkages between N-acetylmuramic acid and N-acetyl-D-glucosamine residues in a peptidoglycan and between N-acetyl-D-glucosamine residues in chitodextrins.. Lysozymes have primarily a bacteriolytic function; those in tissues and body fluids are associated with the monocyte-macrophage system and enhance the activity of immunoagents. The chain is Lysozyme C, non-stomach isozyme (LYS) from Bos taurus (Bovine).